A 291-amino-acid chain; its full sequence is Tumor necrosis factor ligand superfamily member 10 (291 aa).

Residues 1 to 17 lie on the Cytoplasmic side of the membrane; the sequence is MPSSGALKDLSFSQHFR. Residues 18-38 traverse the membrane as a helical; Signal-anchor for type II membrane protein segment; that stretch reads MMVICIVLLQVLLQAVSVAVT. Residues 39 to 291 lie on the Extracellular side of the membrane; that stretch reads YMYFTNEMKQ…ASFFGAFLIN (253 aa). Residue N52 is glycosylated (N-linked (GlcNAc...) asparagine). Residues 126–290 enclose the THD domain; sequence VAAHITGITR…EASFFGAFLI (165 aa). Position 240 (C240) interacts with Zn(2+).

It belongs to the tumor necrosis factor family. In terms of assembly, homotrimer. One TNFSF10 homotrimer interacts with three TNFSF10A mononers. One TNFSF10 homotrimer interacts with three TNFSF10B mononers. In terms of processing, tyrosine phosphorylated by PKDCC/VLK. In terms of tissue distribution, widespread.

The protein localises to the cell membrane. The protein resides in the secreted. Its function is as follows. Cytokine that binds to TNFRSF10A/TRAILR1, TNFRSF10B/TRAILR2, TNFRSF10C/TRAILR3, TNFRSF10D/TRAILR4 and possibly also to TNFRSF11B/OPG. Induces apoptosis. Its activity may be modulated by binding to the decoy receptors TNFRSF10C/TRAILR3, TNFRSF10D/TRAILR4 and TNFRSF11B/OPG that cannot induce apoptosis. The sequence is that of Tumor necrosis factor ligand superfamily member 10 (Tnfsf10) from Mus musculus (Mouse).